Reading from the N-terminus, the 439-residue chain is Protein translocase subunit SecY (439 aa).

The next 10 helical transmembrane spans lie at 19 to 39 (ILFT…TVPG), 68 to 88 (YSLF…VQLL), 116 to 136 (YITL…FQAM), 151 to 171 (LMIG…GEQI), 176 to 196 (FGSG…PSAV), 216 to 236 (WLFV…TTFV), 269 to 289 (VIPV…LQFL), 312 to 332 (WTGM…YSFV), 373 to 393 (VGAL…NVWG), and 396 to 416 (KIVA…IQAV).

This sequence belongs to the SecY/SEC61-alpha family. As to quaternary structure, component of the Sec protein translocase complex. Heterotrimer consisting of SecY, SecE and SecG subunits. The heterotrimers can form oligomers, although 1 heterotrimer is thought to be able to translocate proteins. Interacts with the ribosome. Interacts with SecDF, and other proteins may be involved. Interacts with SecA.

It is found in the cell membrane. The central subunit of the protein translocation channel SecYEG. Consists of two halves formed by TMs 1-5 and 6-10. These two domains form a lateral gate at the front which open onto the bilayer between TMs 2 and 7, and are clamped together by SecE at the back. The channel is closed by both a pore ring composed of hydrophobic SecY resides and a short helix (helix 2A) on the extracellular side of the membrane which forms a plug. The plug probably moves laterally to allow the channel to open. The ring and the pore may move independently. This Lactococcus lactis subsp. lactis (strain IL1403) (Streptococcus lactis) protein is Protein translocase subunit SecY.